The chain runs to 251 residues: Sugar fermentation stimulation protein homolog (251 aa).

It belongs to the SfsA family.

The sequence is that of Sugar fermentation stimulation protein homolog from Prochlorococcus marinus (strain SARG / CCMP1375 / SS120).